Reading from the N-terminus, the 620-residue chain is Apoptosis regulator MC163R (620 aa).

The chain crosses the membrane as a helical span at residues 113–133; that stretch reads APLPLLLLPLLLPPMILLFFL.

Its subcellular location is the host mitochondrion. It is found in the host membrane. In terms of biological role, plays a role in the inhibition of host apoptosis. Prevents host TNF-alpha-induced mitochondrial membrane permeabilization and reduces caspase-3/CASP3 and PARP1 cleavage induced by the intrinsic apoptotic pathway. The sequence is that of Apoptosis regulator MC163R (MC163R) from Homo sapiens (Human).